Here is a 3232-residue protein sequence, read N- to C-terminus: D-lysergyl-peptide-synthetase subunit 1 (3232 aa).

Residues 90 to 474 (GCLTYDEMSI…LGRKDDQVKI (385 aa)) form an adenylation (A) domain 1 region. Positions 617–686 (REKLLQGCFA…TLREIVIVST (70 aa)) constitute a Carrier 1 domain. O-(pantetheine 4'-phosphoryl)serine is present on S649. The condensation (C) domain 1 stretch occupies residues 731–1122 (EDIYPCTHLQ…EHILTQIHSN (392 aa)). An adenylation (A) domain 2 region spans residues 1165–1572 (QAKCQAQPDA…RRKDAQVKIR (408 aa)). The 69-residue stretch at 1717–1785 (TEHEISAIWA…TIRKLALARG (69 aa)) folds into the Carrier 2 domain. S1749 carries the O-(pantetheine 4'-phosphoryl)serine modification. The interval 1835–2252 (ERIYPCSPIQ…ALPVLDEDQM (418 aa)) is condensation (C) domain 2. An adenylation (A) domain 3 region spans residues 2276–2675 (QQCLRCPDSP…GRNDDQVKVR (400 aa)). The region spanning 2810–2878 (MEAELQRLVG…RVSDLARIVE (69 aa)) is the Carrier 3 domain. At S2842 the chain carries O-(pantetheine 4'-phosphoryl)serine. The segment at 2943–3218 (LYFSKPVASE…LLHWLHQQHI (276 aa)) is cyclization (Cyc) domain.

The protein belongs to the NRP synthetase family.

Its pathway is alkaloid biosynthesis; ergot alkaloid biosynthesis. D-lysergyl-peptide-synthetase subunit 1; part of the gene cluster that mediates the biosynthesis of fungal ergot alkaloid. DmaW catalyzes the first step of ergot alkaloid biosynthesis by condensing dimethylallyl diphosphate (DMAP) and tryptophan to form 4-dimethylallyl-L-tryptophan. The second step is catalyzed by the methyltransferase easF that methylates 4-dimethylallyl-L-tryptophan in the presence of S-adenosyl-L-methionine, resulting in the formation of 4-dimethylallyl-L-abrine. The catalase easC and the FAD-dependent oxidoreductase easE then transform 4-dimethylallyl-L-abrine to chanoclavine-I which is further oxidized by easD in the presence of NAD(+), resulting in the formation of chanoclavine-I aldehyde. Agroclavine dehydrogenase easG then mediates the conversion of chanoclavine-I aldehyde to agroclavine via a non-enzymatic adduct reaction: the substrate is an iminium intermediate that is formed spontaneously from chanoclavine-I aldehyde in the presence of glutathione. The presence of easA is not required to complete this reaction. Further conversion of agroclavine to paspalic acid is a two-step process involving oxidation of agroclavine to elymoclavine and of elymoclavine to paspalic acid, the second step being performed by the elymoclavine oxidase cloA. Paspalic acid is then further converted to D-lysergic acid. Ergopeptines are assembled from D-lysergic acid and three different amino acids by the D-lysergyl-peptide-synthetases composed each of a monomudular and a trimodular nonribosomal peptide synthetase subunit. LpsB and lpsC encode the monomodular subunits responsible for D-lysergic acid activation and incorporation into the ergopeptine backbone. LpsA1 and A2 subunits encode the trimodular nonribosomal peptide synthetase assembling the tripeptide portion of ergopeptines. LpsA1 is responsible for formation of the major ergopeptine, ergotamine, and lpsA2 for alpha-ergocryptine, the minor ergopeptine of the total alkaloid mixture elaborated by C.purpurea. D-lysergyl-tripeptides are assembled by the nonribosomal peptide synthetases and released as N-(D-lysergyl-aminoacyl)-lactams. Cyclolization of the D-lysergyl-tripeptides is performed by the Fe(2+)/2-ketoglutarate-dependent dioxygenase easH which introduces a hydroxyl group into N-(D-lysergyl-aminoacyl)-lactam at alpha-C of the aminoacyl residue followed by spontaneous condensation with the terminal lactam carbonyl group. This is D-lysergyl-peptide-synthetase subunit 1 from Claviceps purpurea (Ergot fungus).